Consider the following 450-residue polypeptide: Plasmepsin VII (450 aa).

The first 24 residues, 1–24, serve as a signal peptide directing secretion; sequence MNKNIIQIYLFVFILLLKQHIVIL. In terms of domain architecture, Peptidase A1 spans 92 to 441; sequence YYGEVQIGEQ…DKDNLKIGFV (350 aa). Active-site residues include Asp-111 and Asp-324.

The protein belongs to the peptidase A1 family.

The protein resides in the cytoplasm. The protein is Plasmepsin VII of Plasmodium falciparum (isolate NF54).